Here is a 201-residue protein sequence, read N- to C-terminus: Imidazoleglycerol-phosphate dehydratase (201 aa).

This sequence belongs to the imidazoleglycerol-phosphate dehydratase family.

The protein resides in the cytoplasm. It carries out the reaction D-erythro-1-(imidazol-4-yl)glycerol 3-phosphate = 3-(imidazol-4-yl)-2-oxopropyl phosphate + H2O. Its pathway is amino-acid biosynthesis; L-histidine biosynthesis; L-histidine from 5-phospho-alpha-D-ribose 1-diphosphate: step 6/9. This chain is Imidazoleglycerol-phosphate dehydratase, found in Synechococcus sp. (strain CC9902).